Here is a 573-residue protein sequence, read N- to C-terminus: 2-succinyl-5-enolpyruvyl-6-hydroxy-3-cyclohexene-1-carboxylate synthase (573 aa).

The protein belongs to the TPP enzyme family. MenD subfamily. In terms of assembly, homodimer. The cofactor is Mg(2+). Mn(2+) is required as a cofactor. It depends on thiamine diphosphate as a cofactor.

The enzyme catalyses isochorismate + 2-oxoglutarate + H(+) = 5-enolpyruvoyl-6-hydroxy-2-succinyl-cyclohex-3-ene-1-carboxylate + CO2. It functions in the pathway quinol/quinone metabolism; 1,4-dihydroxy-2-naphthoate biosynthesis; 1,4-dihydroxy-2-naphthoate from chorismate: step 2/7. Its pathway is quinol/quinone metabolism; menaquinone biosynthesis. Its function is as follows. Catalyzes the thiamine diphosphate-dependent decarboxylation of 2-oxoglutarate and the subsequent addition of the resulting succinic semialdehyde-thiamine pyrophosphate anion to isochorismate to yield 2-succinyl-5-enolpyruvyl-6-hydroxy-3-cyclohexene-1-carboxylate (SEPHCHC). This chain is 2-succinyl-5-enolpyruvyl-6-hydroxy-3-cyclohexene-1-carboxylate synthase, found in Shewanella sp. (strain W3-18-1).